The sequence spans 394 residues: Elongation factor Tu (394 aa).

The region spanning 10–204 is the tr-type G domain; the sequence is KPHVNIGTIG…AVDSYIPQPV (195 aa). The interval 19–26 is G1; that stretch reads GHVDHGKT. 19 to 26 is a binding site for GTP; it reads GHVDHGKT. Threonine 26 provides a ligand contact to Mg(2+). Residues 60–64 are G2; sequence GITIS. The segment at 81–84 is G3; it reads DCPG. Residues 81–85 and 136–139 contribute to the GTP site; these read DCPGH and NKVD. A G4 region spans residues 136-139; it reads NKVD. Residues 174–176 form a G5 region; sequence SAL.

It belongs to the TRAFAC class translation factor GTPase superfamily. Classic translation factor GTPase family. EF-Tu/EF-1A subfamily. In terms of assembly, monomer.

The protein localises to the cytoplasm. The catalysed reaction is GTP + H2O = GDP + phosphate + H(+). GTP hydrolase that promotes the GTP-dependent binding of aminoacyl-tRNA to the A-site of ribosomes during protein biosynthesis. This chain is Elongation factor Tu, found in Rickettsia helvetica.